We begin with the raw amino-acid sequence, 156 residues long: Small ribosomal subunit protein uS7 (156 aa).

It belongs to the universal ribosomal protein uS7 family. In terms of assembly, part of the 30S ribosomal subunit. Contacts proteins S9 and S11.

In terms of biological role, one of the primary rRNA binding proteins, it binds directly to 16S rRNA where it nucleates assembly of the head domain of the 30S subunit. Is located at the subunit interface close to the decoding center, probably blocks exit of the E-site tRNA. The polypeptide is Small ribosomal subunit protein uS7 (Acholeplasma laidlawii (strain PG-8A)).